The chain runs to 179 residues: Large ribosomal subunit protein uL6 (179 aa).

The protein belongs to the universal ribosomal protein uL6 family. In terms of assembly, part of the 50S ribosomal subunit.

Its function is as follows. This protein binds to the 23S rRNA, and is important in its secondary structure. It is located near the subunit interface in the base of the L7/L12 stalk, and near the tRNA binding site of the peptidyltransferase center. This chain is Large ribosomal subunit protein uL6, found in Bacillus subtilis (strain 168).